Here is a 569-residue protein sequence, read N- to C-terminus: BTB/POZ domain-containing protein At3g50840 (569 aa).

The region spanning 18–87 (SDIEIEVDDI…SYGFKVDISV (70 aa)) is the BTB domain. The NPH3 domain occupies 194–459 (ELWFEDLTEL…VQVLFLEQLQ (266 aa)). Over residues 240–259 (ISRSSSASSSSSSSSTTIAS) the composition is skewed to low complexity. The disordered stretch occupies residues 240 to 261 (ISRSSSASSSSSSSSTTIASEN). Tyr400 carries the post-translational modification Phosphotyrosine.

This sequence belongs to the NPH3 family.

It participates in protein modification; protein ubiquitination. May act as a substrate-specific adapter of an E3 ubiquitin-protein ligase complex (CUL3-RBX1-BTB) which mediates the ubiquitination and subsequent proteasomal degradation of target proteins. The polypeptide is BTB/POZ domain-containing protein At3g50840 (Arabidopsis thaliana (Mouse-ear cress)).